Consider the following 293-residue polypeptide: Ubiquinone biosynthesis protein COQ9-B, mitochondrial (293 aa).

The tract at residues 21 to 73 is disordered; sequence LRSDDQKQPPFSSSSTHAETPEHAEEQYQQQQSPPRYTDQAGEESEDYESEEQ. Positions 29–38 are enriched in polar residues; the sequence is PPFSSSSTHA. Residues 61 to 72 show a composition bias toward acidic residues; that stretch reads AGEESEDYESEE. Arg219 lines the a 1,2-diacylglycero-3-phosphoethanolamine pocket.

It belongs to the COQ9 family. As to quaternary structure, homodimer. Heterodimer; two heterodimers of COQ7:COQ9 come together on the same side of the lipid pseudo-bilayer and form a curved tetramer with a hydrophobic surface suitable for membrane interaction. These two tetramers assemble into a soluble octamer with a pseudo-bilayer of lipids captured within. Interacts with COQ7; this interaction allows ubiquinone (CoQ) isoprene intermediates presentation to COQ7 and facilitates the COQ7-mediated hydroxylase step.

It localises to the mitochondrion. Its pathway is cofactor biosynthesis; ubiquinone biosynthesis. Functionally, membrane-associated protein that warps the membrane surface to access and bind aromatic isoprenes with high specificity, including ubiquinone (CoQ) isoprene intermediates and presents them directly to COQ7, therefore facilitating the COQ7-mediated hydroxylase step. Participates in the biosynthesis of coenzyme Q, also named ubiquinone, an essential lipid-soluble electron transporter for aerobic cellular respiration. This is Ubiquinone biosynthesis protein COQ9-B, mitochondrial (coq9-b) from Xenopus laevis (African clawed frog).